Consider the following 347-residue polypeptide: S-adenosylmethionine:tRNA ribosyltransferase-isomerase (347 aa).

Belongs to the QueA family. Monomer.

It localises to the cytoplasm. The enzyme catalyses 7-aminomethyl-7-carbaguanosine(34) in tRNA + S-adenosyl-L-methionine = epoxyqueuosine(34) in tRNA + adenine + L-methionine + 2 H(+). The protein operates within tRNA modification; tRNA-queuosine biosynthesis. Its function is as follows. Transfers and isomerizes the ribose moiety from AdoMet to the 7-aminomethyl group of 7-deazaguanine (preQ1-tRNA) to give epoxyqueuosine (oQ-tRNA). The protein is S-adenosylmethionine:tRNA ribosyltransferase-isomerase of Erythrobacter litoralis (strain HTCC2594).